The primary structure comprises 579 residues: 2-isopropylmalate synthase (579 aa).

Residues 33–308 form the Pyruvate carboxyltransferase domain; that stretch reads PRWLSTDLRD…DPGIDFSDIN (276 aa). Residues D42, H247, H249, and N283 each contribute to the Mg(2+) site. Residues 450–579 are regulatory domain; that stretch reads SSDLPVPLAS…IVAPLVAAGR (130 aa).

This sequence belongs to the alpha-IPM synthase/homocitrate synthase family. LeuA type 2 subfamily. Homodimer. It depends on Mg(2+) as a cofactor.

It localises to the cytoplasm. It catalyses the reaction 3-methyl-2-oxobutanoate + acetyl-CoA + H2O = (2S)-2-isopropylmalate + CoA + H(+). Its pathway is amino-acid biosynthesis; L-leucine biosynthesis; L-leucine from 3-methyl-2-oxobutanoate: step 1/4. In terms of biological role, catalyzes the condensation of the acetyl group of acetyl-CoA with 3-methyl-2-oxobutanoate (2-ketoisovalerate) to form 3-carboxy-3-hydroxy-4-methylpentanoate (2-isopropylmalate). The polypeptide is 2-isopropylmalate synthase (Streptosporangium roseum (strain ATCC 12428 / DSM 43021 / JCM 3005 / KCTC 9067 / NCIMB 10171 / NRRL 2505 / NI 9100)).